The chain runs to 323 residues: Cysteine synthase A (323 aa).

Hydrogen sulfide-binding residues include N8 and R35. K42 is subject to N6-(pyridoxal phosphate)lysine. Residues N72 and 177–181 (GTGGT) contribute to the pyridoxal 5'-phosphate site. L269 provides a ligand contact to hydrogen sulfide. S273 provides a ligand contact to pyridoxal 5'-phosphate.

This sequence belongs to the cysteine synthase/cystathionine beta-synthase family. In terms of assembly, homodimer. Requires pyridoxal 5'-phosphate as cofactor.

It carries out the reaction O-acetyl-L-serine + hydrogen sulfide = L-cysteine + acetate. It functions in the pathway amino-acid biosynthesis; L-cysteine biosynthesis; L-cysteine from L-serine: step 2/2. Functionally, two cysteine synthase enzymes are found. Both catalyze the same reaction. Cysteine synthase B can also use thiosulfate in place of sulfide to give cysteine thiosulfonate as a product. This is Cysteine synthase A (cysK) from Salmonella typhi.